The chain runs to 317 residues: MLIRFGYVSHAMALWDCSPAKTMTFTSFKKLSKQEREDKLYHVIRQNLEHTIRILHYNIAHEIPLYRLSSSIVPLATHPEVEFDYIGVFTPLWRKIGALIKEHNLRISFHPNQFTLFTSDKPHITTNAITDMTYHYKILDAIGIADSSYINIHVGGAYGNKEKAIERFHENIKKLPTHIKKQMTLENDDKTYTTAETLSICQKENIPFVFDYHHHMANLCEEPLEELLPAIFETWSHTNISPKVHISSPRSEKEFRAHAEYIDLEFIKPFLHIAKKHNHNFDIMIESKQKDLALFQLIDELSAIRGIKRISGAMLQW.

This sequence belongs to the uve1/UvsE family.

Component in a DNA repair pathway. Removal of UV LIGHT damaged nucleotides. Recognizes pyrimidine dimers and cleave a phosphodiester bond immediately 5' to the lesion. The chain is UV DNA damage endonuclease from Bacillus cereus (strain B4264).